Consider the following 588-residue polypeptide: Putative calcium-binding mitochondrial carrier F55A11.4 (588 aa).

A compositionally biased stretch (polar residues) spans 1–14 (MINKNEQTESTSGA). The segment at 1 to 25 (MINKNEQTESTSGAAEQKEDDEEQY) is disordered. EF-hand domains follow at residues 73–108 (EKERQIRDIYDRLDIDNDGTIDIRDLTLALKHETPH), 109–139 (IPANLAPVIMSKMSPDDEGRVDFYSFSSYVL), 140–175 (ENEQKLAEMFADMDRNHDGLVDVVEMKNYCKDIGVP), and 176–211 (LDDHKAQHIVNKMDQTGSASVDLKEFQEFMMLYPSS). Ca(2+) is bound by residues D86, D88, D90, T92, and D97. D153, N155, D157, and E164 together coordinate Ca(2+). 3 Solcar repeats span residues 246-332 (GIWW…LKRL), 342-428 (ISTF…LKRT), and 440-529 (PGVL…VRTG). Helical transmembrane passes span 252–269 (LVAGGAAGAVSRTCTAPF), 307–326 (GNGINVIKIAPESAIKFMCY), 352–365 (SAAGAISQSTIYPM), 403–422 (GYLPNLIGIIPYAGIDLAIY), 446–463 (LACGTCSSTCGQLSSYPF), and 504–523 (GITPNFLKVIPAVSISYVVY).

Belongs to the mitochondrial carrier (TC 2.A.29) family. In terms of assembly, homodimer (via N-terminus).

The protein localises to the mitochondrion inner membrane. In terms of biological role, mitochondrial and calcium-binding carrier that catalyzes the calcium-dependent exchange of cytoplasmic glutamate with mitochondrial aspartate across the mitochondrial inner membrane. This is Putative calcium-binding mitochondrial carrier F55A11.4 from Caenorhabditis elegans.